Consider the following 260-residue polypeptide: MVLIRVLANLLILQLSYAQKSSELVIGGDECNINEHPFLVALYDAWSGRFLCGGTLINPEWVLTAAHCDSKNFKMKLGAHSKKVLNEDEQIRNPKEKFICPNKKNDEVLDKDIMLIKLDSPVSYSEHIAPLSLPSSPPSVGSVCRIMGWGSITPVEETFPDVPHCANINLLDDVECKPGYPELLPEYRTLCAGVLQGGIDTCGFDSGTPLICNGQFQGIVSYGGHPCGQSRKPGIYTKVFDYNAWIQSIIAGNTAATCLP.

An N-terminal signal peptide occupies residues 1–18 (MVLIRVLANLLILQLSYA). A propeptide spanning residues 19–24 (QKSSEL) is cleaved from the precursor. Residues 25-251 (VIGGDECNIN…YNAWIQSIIA (227 aa)) form the Peptidase S1 domain. Cystine bridges form between Cys-31–Cys-165, Cys-52–Cys-68, Cys-100–Cys-258, Cys-144–Cys-212, Cys-176–Cys-191, and Cys-202–Cys-227. Catalysis depends on charge relay system residues His-67 and Asp-112. Ser-206 acts as the Charge relay system in catalysis.

The protein belongs to the peptidase S1 family. Snake venom subfamily. Monomer. Expressed by the venom gland.

It localises to the secreted. The enzyme catalyses Selective cleavage of Arg-|-Xaa bond in fibrinogen, to form fibrin, and release fibrinopeptide A. The specificity of further degradation of fibrinogen varies with species origin of the enzyme.. Inhibited by alpha(2)-macroglobulin, diisopropylfluorophosphate (DFP) and PMSF. Low inhibition by tosyl-L-lysine chloromethyl ketone. In terms of biological role, thrombin-like snake venom serine protease that clots fibrinogen (FGA) by releasing fibrinopeptide A. According to PubMed:8585090, only cleaves rabbit fibrinogen, whereas no specificity is described in PubMed:3910643 (tests done on bovine fibrinogen). Also acts as a C3 convertase that independently cleaves human C3 and kick-starts the complement cascade. Also increases urokinase-type plasminogen activator (PLAU) and plasminogen activator inhibitor (SERPINE1) in cultured bovine pulmonary artery endothelial cells. Dose-dependently inhibits collagen-induced platelet aggregation. The protein is Thrombin-like enzyme flavoxobin (TLF1) of Protobothrops flavoviridis (Habu).